The following is an 82-amino-acid chain: Putative membrane protein insertion efficiency factor (82 aa).

This sequence belongs to the UPF0161 family.

It is found in the cell inner membrane. Could be involved in insertion of integral membrane proteins into the membrane. In Rickettsia peacockii (strain Rustic), this protein is Putative membrane protein insertion efficiency factor.